The primary structure comprises 297 residues: 3-methyl-2-oxobutanoate hydroxymethyltransferase (297 aa).

The segment covering 1-15 (MSEQISEQSEQNVYG) has biased composition (polar residues). Positions 1–40 (MSEQISEQSEQNVYGASSPVPAGESSPSAASAPRTKVRTH) are disordered. The segment covering 16–33 (ASSPVPAGESSPSAASAP) has biased composition (low complexity). Asp78 and Asp117 together coordinate Mg(2+). 3-methyl-2-oxobutanoate-binding positions include 78–79 (DS), Asp117, and Lys147. Glu149 lines the Mg(2+) pocket. Residue Glu215 is the Proton acceptor of the active site.

This sequence belongs to the PanB family. In terms of assembly, homodecamer; pentamer of dimers. It depends on Mg(2+) as a cofactor.

It localises to the cytoplasm. It catalyses the reaction 3-methyl-2-oxobutanoate + (6R)-5,10-methylene-5,6,7,8-tetrahydrofolate + H2O = 2-dehydropantoate + (6S)-5,6,7,8-tetrahydrofolate. It functions in the pathway cofactor biosynthesis; (R)-pantothenate biosynthesis; (R)-pantoate from 3-methyl-2-oxobutanoate: step 1/2. In terms of biological role, catalyzes the reversible reaction in which hydroxymethyl group from 5,10-methylenetetrahydrofolate is transferred onto alpha-ketoisovalerate to form ketopantoate. This chain is 3-methyl-2-oxobutanoate hydroxymethyltransferase, found in Mycobacterium marinum (strain ATCC BAA-535 / M).